Here is a 108-residue protein sequence, read N- to C-terminus: Large ribosomal subunit protein uL24 (108 aa).

It belongs to the universal ribosomal protein uL24 family. As to quaternary structure, part of the 50S ribosomal subunit.

In terms of biological role, one of two assembly initiator proteins, it binds directly to the 5'-end of the 23S rRNA, where it nucleates assembly of the 50S subunit. Its function is as follows. One of the proteins that surrounds the polypeptide exit tunnel on the outside of the subunit. This chain is Large ribosomal subunit protein uL24, found in Moorella thermoacetica (strain ATCC 39073 / JCM 9320).